A 127-amino-acid polypeptide reads, in one-letter code: Pleckstrin homology-like domain family A member 3 (127 aa).

The PH domain maps to 5–108 (KVMNDGYLEK…RFKNRVAVQT (104 aa)).

The protein belongs to the PHLDA3 family.

Its subcellular location is the cytoplasm. The protein localises to the membrane. P53/tp53-regulated repressor of Akt/akt1 signaling. Represses akt1 by preventing akt1-binding to membrane lipids, thereby inhibiting akt1 translocation to the cellular membrane and activation. Contributes to p53/tp53-dependent apoptosis by repressing akt1 activity. Its direct transcription regulation by p53/tp53 may explain how p53/tp53 can negatively regulate akt1. May act as a tumor suppressor. This chain is Pleckstrin homology-like domain family A member 3 (phlda3), found in Danio rerio (Zebrafish).